The primary structure comprises 307 residues: Aspartate carbamoyltransferase catalytic subunit (307 aa).

Positions 59 and 60 each coordinate carbamoyl phosphate. Residue Lys87 coordinates L-aspartate. Carbamoyl phosphate is bound by residues Arg109, His137, and Gln140. The L-aspartate site is built by Arg173 and Arg223. Carbamoyl phosphate is bound by residues Gly266 and Pro267.

This sequence belongs to the aspartate/ornithine carbamoyltransferase superfamily. ATCase family. Heterododecamer (2C3:3R2) of six catalytic PyrB chains organized as two trimers (C3), and six regulatory PyrI chains organized as three dimers (R2).

The catalysed reaction is carbamoyl phosphate + L-aspartate = N-carbamoyl-L-aspartate + phosphate + H(+). It functions in the pathway pyrimidine metabolism; UMP biosynthesis via de novo pathway; (S)-dihydroorotate from bicarbonate: step 2/3. Catalyzes the condensation of carbamoyl phosphate and aspartate to form carbamoyl aspartate and inorganic phosphate, the committed step in the de novo pyrimidine nucleotide biosynthesis pathway. The sequence is that of Aspartate carbamoyltransferase catalytic subunit from Helicobacter pylori (strain HPAG1).